A 468-amino-acid chain; its full sequence is ATP synthase subunit beta (468 aa).

Gly156–Thr163 is a binding site for ATP.

It belongs to the ATPase alpha/beta chains family. As to quaternary structure, F-type ATPases have 2 components, CF(1) - the catalytic core - and CF(0) - the membrane proton channel. CF(1) has five subunits: alpha(3), beta(3), gamma(1), delta(1), epsilon(1). CF(0) has three main subunits: a(1), b(2) and c(9-12). The alpha and beta chains form an alternating ring which encloses part of the gamma chain. CF(1) is attached to CF(0) by a central stalk formed by the gamma and epsilon chains, while a peripheral stalk is formed by the delta and b chains.

It localises to the cell inner membrane. It catalyses the reaction ATP + H2O + 4 H(+)(in) = ADP + phosphate + 5 H(+)(out). Functionally, produces ATP from ADP in the presence of a proton gradient across the membrane. The catalytic sites are hosted primarily by the beta subunits. The protein is ATP synthase subunit beta of Sulfurimonas denitrificans (strain ATCC 33889 / DSM 1251) (Thiomicrospira denitrificans (strain ATCC 33889 / DSM 1251)).